A 281-amino-acid chain; its full sequence is Lipoyl synthase (281 aa).

Residues cysteine 37, cysteine 42, cysteine 48, cysteine 63, cysteine 67, cysteine 70, and serine 274 each coordinate [4Fe-4S] cluster. The 215-residue stretch at 49–263 (WSRGTATFMI…RQQAVNKGFK (215 aa)) folds into the Radical SAM core domain.

Belongs to the radical SAM superfamily. Lipoyl synthase family. [4Fe-4S] cluster serves as cofactor.

The protein resides in the cytoplasm. It catalyses the reaction [[Fe-S] cluster scaffold protein carrying a second [4Fe-4S](2+) cluster] + N(6)-octanoyl-L-lysyl-[protein] + 2 oxidized [2Fe-2S]-[ferredoxin] + 2 S-adenosyl-L-methionine + 4 H(+) = [[Fe-S] cluster scaffold protein] + N(6)-[(R)-dihydrolipoyl]-L-lysyl-[protein] + 4 Fe(3+) + 2 hydrogen sulfide + 2 5'-deoxyadenosine + 2 L-methionine + 2 reduced [2Fe-2S]-[ferredoxin]. It participates in protein modification; protein lipoylation via endogenous pathway; protein N(6)-(lipoyl)lysine from octanoyl-[acyl-carrier-protein]: step 2/2. Its function is as follows. Catalyzes the radical-mediated insertion of two sulfur atoms into the C-6 and C-8 positions of the octanoyl moiety bound to the lipoyl domains of lipoate-dependent enzymes, thereby converting the octanoylated domains into lipoylated derivatives. The polypeptide is Lipoyl synthase (Parabacteroides distasonis (strain ATCC 8503 / DSM 20701 / CIP 104284 / JCM 5825 / NCTC 11152)).